Here is a 499-residue protein sequence, read N- to C-terminus: Lysosomal Pro-X carboxypeptidase (499 aa).

The first 21 residues, 1 to 21 (MGRCSLLLLLLLIAFLTPGAA), serve as a signal peptide directing secretion. Residues 22–47 (NPVSPSLRAPSSLPWSTSFRSRPTIT) constitute a propeptide that is removed on maturation. Asn-103 is a glycosylation site (N-linked (GlcNAc...) asparagine). Catalysis depends on Ser-181, which acts as the Charge relay system. Residues 196-337 (HLVVGALASS…QNIFQALNVY (142 aa)) form an SKS domain region. 4 disulfide bridges follow: Cys-217/Cys-375, Cys-235/Cys-313, Cys-266/Cys-346, and Cys-367/Cys-397. A glycan (N-linked (GlcNAc...) asparagine) is linked at Asn-234. N-linked (GlcNAc...) asparagine glycosylation is found at Asn-339 and Asn-348. N-linked (GlcNAc...) asparagine glycosylation occurs at Asn-418. Residues Asp-433 and His-458 each act as charge relay system in the active site.

The protein belongs to the peptidase S28 family. As to quaternary structure, homodimer.

Its subcellular location is the lysosome. The enzyme catalyses Cleavage of a -Pro-|-Xaa bond to release a C-terminal amino acid.. Functionally, cleaves C-terminal amino acids linked to proline in peptides such as angiotensin II, III and des-Arg9-bradykinin. This cleavage occurs at acidic pH, but enzymatic activity is retained with some substrates at neutral pH. In Bos taurus (Bovine), this protein is Lysosomal Pro-X carboxypeptidase (PRCP).